The primary structure comprises 2110 residues: Protein Ycf2 (2110 aa).

1336-1343 (GSIGTGRS) provides a ligand contact to ATP. Positions 1852 to 1876 (EEEAELQDEEAELQDEGAGRKDEEA) are disordered. The span at 1854-1866 (EAELQDEEAELQD) shows a compositional bias: acidic residues.

It belongs to the Ycf2 family.

The protein localises to the plastid. The protein resides in the chloroplast stroma. In terms of biological role, probable ATPase of unknown function. Its presence in a non-photosynthetic plant (Epifagus virginiana) and experiments in tobacco indicate that it has an essential function which is probably not related to photosynthesis. This chain is Protein Ycf2 (ycf2-A), found in Pelargonium hortorum (Common geranium).